The sequence spans 469 residues: Cold shock protein CS66 (469 aa).

21 tandem repeats follow at residues 9–31, 49–62, 72–94, 95–108, 115–128, 135–148, 149–162, 170–192, 193–206, 213–226, 234–256, 257–270, 277–290, 298–320, 321–334, 341–354, 362–384, 385–398, 405–418, 428–441, and 452–469. The interval 9–390 is 7 X 23 AA approximate repeats; that stretch reads GEKKGIMEKI…DHQQTGGAYG (382 aa). A 14 X 14 AA approximate repeats region spans residues 49-441; the sequence is TGGAYGQEGH…HGQHGHTGTT (393 aa). Positions 87 to 112 are disordered; that stretch reads GGHADHQQTGGTYGQQGHTGTATHGT. The segment covering 93–112 has biased composition (low complexity); it reads QQTGGTYGQQGHTGTATHGT. Low complexity predominate over residues 203 to 214; it reads FATGTHGTPATG. The segment at 203–469 is disordered; that stretch reads FATGTHGTPA…KIKDKLPGQH (267 aa). Basic and acidic residues predominate over residues 233–254; that stretch reads TGEKKGLMENIKDKLPGGHGDH. Over residues 255 to 274 the composition is skewed to low complexity; the sequence is QQTGGTYGQQGHTGAATHGT. A compositionally biased stretch (gly residues) spans 288-301; that stretch reads GMTGTGTHGTGGKK. Over residues 302 to 312 the composition is skewed to basic and acidic residues; that stretch reads GVMENIKDKLP. Over residues 361–382 the composition is skewed to basic and acidic residues; it reads TGEKKAVMENIKDKLPGGHGDH. Composition is skewed to low complexity over residues 383 to 402 and 412 to 429; these read QQTG…THGT and HGNT…TATG. Residues 439-450 are compositionally biased toward gly residues; sequence GTTGTGTHGTDG. Positions 451–469 are enriched in basic and acidic residues; the sequence is VGEKKSLMDKIKDKLPGQH.

This sequence belongs to the plant dehydrin family.

In terms of biological role, may reduce intracellular freezing damage during winter by hydrogen-bonding to the lattice of the nascent ice crystals, thus modifying the structure and/or propagation of ice crystals. This is Cold shock protein CS66 (CS66) from Triticum aestivum (Wheat).